The sequence spans 199 residues: Recombination protein RecR (199 aa).

The C4-type zinc finger occupies 56 to 71; it reads CRSCFNVAQSELCRIC. The Toprim domain occupies 79–174; the sequence is ALICVVEEPK…RVTRLASGLP (96 aa).

Belongs to the RecR family.

May play a role in DNA repair. It seems to be involved in an RecBC-independent recombinational process of DNA repair. It may act with RecF and RecO. The chain is Recombination protein RecR from Frankia alni (strain DSM 45986 / CECT 9034 / ACN14a).